We begin with the raw amino-acid sequence, 328 residues long: Serine protease 48 (328 aa).

The N-terminal stretch at 1–20 (MGPAGCAFTLLLLLGISVCG) is a signal peptide. In terms of domain architecture, Peptidase S1 spans 28 to 267 (VVGGQDAAAG…YQKWINATIS (240 aa)). Cysteine 53 and cysteine 69 are oxidised to a cystine. Active-site charge relay system residues include histidine 68 and aspartate 114. 3 cysteine pairs are disulfide-bonded: cysteine 148–cysteine 226, cysteine 181–cysteine 205, and cysteine 216–cysteine 244. The active-site Charge relay system is serine 220. A glycan (N-linked (GlcNAc...) asparagine) is linked at asparagine 263.

Belongs to the peptidase S1 family.

The protein resides in the secreted. The sequence is that of Serine protease 48 (PRSS48) from Homo sapiens (Human).